The following is a 368-amino-acid chain: D-amino-acid oxidase (368 aa).

FAD is bound by residues alanine 11, serine 14, lysine 35, histidine 36, cysteine 46, serine 47, glycine 51, asparagine 53, and phenylalanine 174. Cysteines 230 and 285 form a disulfide. Residues tyrosine 244, tyrosine 260, and arginine 308 each contribute to the (R)-lactate site. The anthranilate site is built by tyrosine 244, tyrosine 260, and arginine 308. FAD-binding residues include arginine 308, glycine 334, glycine 337, tyrosine 338, and glutamine 339. Positions 366 to 368 (ARL) match the Microbody targeting signal motif.

It belongs to the DAMOX/DASOX family. Homotetramer. Requires FAD as cofactor. Post-translationally, the disulfide bond might contribute to the high thermal stability of the protein.

It is found in the peroxisome matrix. It catalyses the reaction a D-alpha-amino acid + O2 + H2O = a 2-oxocarboxylate + H2O2 + NH4(+). It carries out the reaction D-alanine + O2 + H2O = pyruvate + H2O2 + NH4(+). The catalysed reaction is D-glutamate + O2 + H2O = H2O2 + 2-oxoglutarate + NH4(+). The enzyme catalyses D-serine + O2 + H2O = 3-hydroxypyruvate + H2O2 + NH4(+). It catalyses the reaction D-phenylalanine + O2 + H2O = 3-phenylpyruvate + H2O2 + NH4(+). It carries out the reaction D-arginine + O2 + H2O = 5-guanidino-2-oxopentanoate + H2O2 + NH4(+). The catalysed reaction is D-methionine + O2 + H2O = 4-methylsulfanyl-2-oxobutanoate + H2O2 + NH4(+). The enzyme catalyses D-leucine + O2 + H2O = 4-methyl-2-oxopentanoate + H2O2 + NH4(+). It catalyses the reaction D-lysine + O2 + H2O = 6-amino-2-oxohexanoate + H2O2 + NH4(+). It carries out the reaction D-valine + O2 + H2O = 3-methyl-2-oxobutanoate + H2O2 + NH4(+). The catalysed reaction is D-histidine + O2 + H2O = 3-(imidazol-5-yl)pyruvate + H2O2 + NH4(+). The enzyme catalyses D-glutamine + O2 + H2O = 2-oxoglutaramate + H2O2 + NH4(+). It catalyses the reaction D-isoleucine + O2 + H2O = (R)-3-methyl-2-oxopentanoate + H2O2 + NH4(+). It carries out the reaction D-allo-isoleucine + O2 + H2O = (S)-3-methyl-2-oxopentanoate + H2O2 + NH4(+). The catalysed reaction is D-threonine + O2 + H2O = (S)-3-hydroxy-2-oxobutanoate + H2O2 + NH4(+). The enzyme catalyses D-asparagine + O2 + H2O = 2-oxosuccinamate + H2O2 + NH4(+). It catalyses the reaction D-tryptophan + O2 + H2O = indole-3-pyruvate + H2O2 + NH4(+). It carries out the reaction D-tyrosine + O2 + H2O = 3-(4-hydroxyphenyl)pyruvate + H2O2 + NH4(+). With respect to regulation, partially inhibited by benzoate, crotonate, and D-malate. Catalyzes the oxidative deamination of D-amino acids with broad substrate specificity. Enables the organism to utilize D-amino acids as a source of nutrients. Unusually, has high activity on D-glutamate. The sequence is that of D-amino-acid oxidase from Talaromyces emersonii (Thermophilic fungus).